The chain runs to 1203 residues: DNA-directed RNA polymerase subunit beta' (1203 aa).

4 residues coordinate Zn(2+): Cys60, Cys62, Cys75, and Cys78. Asp449, Asp451, and Asp453 together coordinate Mg(2+). Zn(2+) contacts are provided by Cys818, Cys892, Cys899, and Cys902.

This sequence belongs to the RNA polymerase beta' chain family. In terms of assembly, the RNAP catalytic core consists of 2 alpha, 1 beta, 1 beta' and 1 omega subunit. When a sigma factor is associated with the core the holoenzyme is formed, which can initiate transcription. The cofactor is Mg(2+). Requires Zn(2+) as cofactor.

It catalyses the reaction RNA(n) + a ribonucleoside 5'-triphosphate = RNA(n+1) + diphosphate. Functionally, DNA-dependent RNA polymerase catalyzes the transcription of DNA into RNA using the four ribonucleoside triphosphates as substrates. The polypeptide is DNA-directed RNA polymerase subunit beta' (Bacillus cereus (strain ATCC 10987 / NRS 248)).